The sequence spans 546 residues: Chaperonin GroEL (546 aa).

ATP is bound by residues 29–32 (TMGP), K50, 86–90 (DGTTT), G414, and D492.

Belongs to the chaperonin (HSP60) family. Forms a cylinder of 14 subunits composed of two heptameric rings stacked back-to-back. Interacts with the co-chaperonin GroES.

It is found in the cytoplasm. It catalyses the reaction ATP + H2O + a folded polypeptide = ADP + phosphate + an unfolded polypeptide.. Its function is as follows. Together with its co-chaperonin GroES, plays an essential role in assisting protein folding. The GroEL-GroES system forms a nano-cage that allows encapsulation of the non-native substrate proteins and provides a physical environment optimized to promote and accelerate protein folding. The polypeptide is Chaperonin GroEL (Helicobacter pylori (strain P12)).